The sequence spans 66 residues: Conotoxin Cal6.38 (66 aa).

A signal peptide spans 1–22; the sequence is MKLTFVLIVAVLVLAVCNFTVA. 3 cysteine pairs are disulfide-bonded: Cys38-Cys55, Cys45-Cys59, and Cys54-Cys64.

The protein belongs to the conotoxin O1 superfamily. In terms of tissue distribution, expressed by the venom duct.

The protein localises to the secreted. Functionally, probable neurotoxin. The sequence is that of Conotoxin Cal6.38 from Californiconus californicus (California cone).